A 165-amino-acid polypeptide reads, in one-letter code: MTQVTFKHNPVTLVGTERKVGDKAPNFTVVNRDLEEVTLHDYDGKVRLISVVPSIDTSVCSTQTRKFNEEASNLDNTVVLTISVDLPFAQKKWCAAEGLPNAITLSDHRDLSFGEAYGVIMKELRLLARSVFVVNAVGEIVYTEVVPEGSDHPNYEAAIEAAKKA.

The Thioredoxin domain occupies 18–164; sequence RKVGDKAPNF…YEAAIEAAKK (147 aa). Cys60 (cysteine sulfenic acid (-SOH) intermediate) is an active-site residue. Cys60 and Cys94 are oxidised to a cystine.

The protein belongs to the peroxiredoxin family. Tpx subfamily. As to quaternary structure, homodimer.

The enzyme catalyses a hydroperoxide + [thioredoxin]-dithiol = an alcohol + [thioredoxin]-disulfide + H2O. Its function is as follows. Thiol-specific peroxidase that catalyzes the reduction of hydrogen peroxide and organic hydroperoxides to water and alcohols, respectively. Plays a role in cell protection against oxidative stress by detoxifying peroxides. The sequence is that of Thiol peroxidase from Listeria monocytogenes serovar 1/2a (strain ATCC BAA-679 / EGD-e).